A 1241-amino-acid polypeptide reads, in one-letter code: ATP-dependent helicase/nuclease subunit A (1241 aa).

Residues 12-485 form the UvrD-like helicase ATP-binding domain; it reads SQWTDDQWKA…IDLAKNFRSR (474 aa). 33 to 40 lines the ATP pocket; that stretch reads AAAGSGKT. The UvrD-like helicase C-terminal domain occupies 505–805; that stretch reads GEIDYDADAE…RIMTIHKSKG (301 aa).

It belongs to the helicase family. AddA subfamily. In terms of assembly, heterodimer of AddA and AddB/RexB. Mg(2+) is required as a cofactor.

The enzyme catalyses Couples ATP hydrolysis with the unwinding of duplex DNA by translocating in the 3'-5' direction.. The catalysed reaction is ATP + H2O = ADP + phosphate + H(+). In terms of biological role, the heterodimer acts as both an ATP-dependent DNA helicase and an ATP-dependent, dual-direction single-stranded exonuclease. Recognizes the chi site generating a DNA molecule suitable for the initiation of homologous recombination. The AddA nuclease domain is required for chi fragment generation; this subunit has the helicase and 3' -&gt; 5' nuclease activities. This Bacillus cereus (strain G9842) protein is ATP-dependent helicase/nuclease subunit A.